The chain runs to 422 residues: Histidine--tRNA ligase (422 aa).

It belongs to the class-II aminoacyl-tRNA synthetase family. In terms of assembly, homodimer.

It localises to the cytoplasm. The catalysed reaction is tRNA(His) + L-histidine + ATP = L-histidyl-tRNA(His) + AMP + diphosphate + H(+). This Nocardia farcinica (strain IFM 10152) protein is Histidine--tRNA ligase.